The primary structure comprises 236 residues: uncharacterized protein (236 aa).

Residues 7-74 (RTNRRDIYLK…PKIGSFVSRV (68 aa)) enclose the HTH gntR-type domain. The H-T-H motif DNA-binding region spans 34–53 (ENELAASMGVSRTPVRESLI).

This is an uncharacterized protein from Streptomyces ambofaciens.